The following is a 618-amino-acid chain: tRNA endonuclease vms-1 (618 aa).

The segment at 59 to 85 (DQCTTCNCPVDFGDRAVLLEHYQSLFH) adopts a C2H2-type zinc-finger fold. In terms of domain architecture, VLRF1 spans 170–311 (RPFDCAIFLW…SDCWQRLQQV (142 aa)). Q213 is a catalytic residue. ANK repeat units lie at residues 437–466 (NRST…CDSS) and 470–496 (GAGL…VKNE). A disordered region spans residues 502 to 539 (ARTHIPEPKKKVELTEEQEREQAERKKEKKARQKEKEK). Over residues 505-515 (HIPEPKKKVEL) the composition is skewed to basic and acidic residues. The stretch at 510–557 (KKKVELTEEQEREQAERKKEKKARQKEKEKLKKEIAKRDVEEMEERQK) forms a coiled coil.

Belongs to the ANKZF1/VMS1 family. In terms of tissue distribution, in larval stages and in adults, expressed in intestinal cells, specific neurons in the head and the tail, and in the ventral nerve cord.

The protein localises to the cytoplasm. Its subcellular location is the mitochondrion. Functionally, endonuclease that cleaves polypeptidyl-tRNAs downstream of the ribosome-associated quality control (RQC) pathway to release incompletely synthesized polypeptides for degradation. The RQC pathway disassembles aberrantly stalled translation complexes to recycle or degrade the constituent parts. Dispensable for viability and growth but is required for protection against oxidative stress and for wild-type life span. In Caenorhabditis elegans, this protein is tRNA endonuclease vms-1 (vms-1).